A 522-amino-acid chain; its full sequence is Golgin subfamily A member 6-like protein 10 (522 aa).

Pro residues predominate over residues 1 to 11; sequence MWPQPRLPPHP. Positions 1 to 77 are disordered; it reads MWPQPRLPPH…DSATGIYGEG (77 aa). Residues 51 to 62 are compositionally biased toward polar residues; that stretch reads NGSSPDTATSGG. Residues 157–328 are a coiled coil; the sequence is SKVEQLQDET…RLCEQEKLPG (172 aa). Residues 439 to 452 show a composition bias toward basic and acidic residues; it reads KELEKSGGAEEPRG. A disordered region spans residues 439-503; the sequence is KELEKSGGAE…TGEAAGGAEE (65 aa). Low complexity-rich tracts occupy residues 456–471 and 489–503; these read AAAA…PQGA and GEAV…GAEE.

The protein belongs to the GOLGA6 family.

The polypeptide is Golgin subfamily A member 6-like protein 10 (Homo sapiens (Human)).